A 237-amino-acid polypeptide reads, in one-letter code: Ras-related protein RABA3 (237 aa).

Gly35–Thr42 is a GTP binding site. The Effector region motif lies at Ser57–Phe65. GTP is bound by residues Asp83 to Gln87, Asn141 to Asp144, and Ser172 to Ala173. Residues Cys235 and Cys237 are each lipidated (S-geranylgeranyl cysteine). Cys237 bears the Cysteine methyl ester mark.

The protein belongs to the small GTPase superfamily. Rab family. Expressed in root tips.

The protein localises to the endosome membrane. The protein resides in the golgi apparatus. It is found in the trans-Golgi network membrane. Its function is as follows. Intracellular vesicle trafficking and protein transport. This chain is Ras-related protein RABA3 (RABA3), found in Arabidopsis thaliana (Mouse-ear cress).